The following is an 88-amino-acid chain: Small ribosomal subunit protein uS15 (88 aa).

It belongs to the universal ribosomal protein uS15 family. Part of the 30S ribosomal subunit. Forms a bridge to the 50S subunit in the 70S ribosome, contacting the 23S rRNA.

Its function is as follows. One of the primary rRNA binding proteins, it binds directly to 16S rRNA where it helps nucleate assembly of the platform of the 30S subunit by binding and bridging several RNA helices of the 16S rRNA. In terms of biological role, forms an intersubunit bridge (bridge B4) with the 23S rRNA of the 50S subunit in the ribosome. The chain is Small ribosomal subunit protein uS15 from Finegoldia magna (strain ATCC 29328 / DSM 20472 / WAL 2508) (Peptostreptococcus magnus).